We begin with the raw amino-acid sequence, 107 residues long: UPF0145 protein Memar_1285 (107 aa).

It belongs to the UPF0145 family.

The chain is UPF0145 protein Memar_1285 from Methanoculleus marisnigri (strain ATCC 35101 / DSM 1498 / JR1).